The following is a 508-amino-acid chain: Photosystem II CP47 reaction center protein (508 aa).

6 consecutive transmembrane segments (helical) span residues A21–S36, I101–W115, G140–F156, I203–C218, V237–V252, and C457–R472.

Belongs to the PsbB/PsbC family. PsbB subfamily. As to quaternary structure, PSII is composed of 1 copy each of membrane proteins PsbA, PsbB, PsbC, PsbD, PsbE, PsbF, PsbH, PsbI, PsbJ, PsbK, PsbL, PsbM, PsbT, PsbX, PsbY, PsbZ, Psb30/Ycf12, at least 3 peripheral proteins of the oxygen-evolving complex and a large number of cofactors. It forms dimeric complexes. The cofactor is Binds multiple chlorophylls. PSII binds additional chlorophylls, carotenoids and specific lipids..

The protein localises to the plastid. It localises to the chloroplast thylakoid membrane. Functionally, one of the components of the core complex of photosystem II (PSII). It binds chlorophyll and helps catalyze the primary light-induced photochemical processes of PSII. PSII is a light-driven water:plastoquinone oxidoreductase, using light energy to abstract electrons from H(2)O, generating O(2) and a proton gradient subsequently used for ATP formation. In Chlorella vulgaris (Green alga), this protein is Photosystem II CP47 reaction center protein.